The sequence spans 132 residues: Large ribosomal subunit protein uL14 (132 aa).

The protein belongs to the universal ribosomal protein uL14 family. In terms of assembly, part of the 50S ribosomal subunit. Forms a cluster with proteins L3 and L24e, part of which may contact the 16S rRNA in 2 intersubunit bridges.

Functionally, binds to 23S rRNA. Forms part of two intersubunit bridges in the 70S ribosome. The sequence is that of Large ribosomal subunit protein uL14 from Methanococcus aeolicus (strain ATCC BAA-1280 / DSM 17508 / OCM 812 / Nankai-3).